Reading from the N-terminus, the 368-residue chain is Glutamate 5-kinase (368 aa).

An ATP-binding site is contributed by Lys15. Substrate contacts are provided by Ser55, Asp143, and Asn155. ATP-binding positions include 175 to 176 and 217 to 223; these read SD and SGGMVSK. One can recognise a PUA domain in the interval 277–354; it reads EGRLTIDAGA…DAQEAALGYA (78 aa).

It belongs to the glutamate 5-kinase family.

It localises to the cytoplasm. The catalysed reaction is L-glutamate + ATP = L-glutamyl 5-phosphate + ADP. Its pathway is amino-acid biosynthesis; L-proline biosynthesis; L-glutamate 5-semialdehyde from L-glutamate: step 1/2. In terms of biological role, catalyzes the transfer of a phosphate group to glutamate to form L-glutamate 5-phosphate. The chain is Glutamate 5-kinase from Sphingopyxis alaskensis (strain DSM 13593 / LMG 18877 / RB2256) (Sphingomonas alaskensis).